The primary structure comprises 433 residues: Pyrimidine-nucleoside phosphorylase (433 aa).

81–83 (KHS) contributes to the phosphate binding site. Residues Gly88 and Thr90 each contribute to the K(+) site. Residues Thr92, 108–110 (KMS), and Thr120 contribute to the phosphate site. Substrate is bound by residues Arg168 and Lys187. Residues Leu243, Ala246, and Glu255 each contribute to the K(+) site.

The protein belongs to the thymidine/pyrimidine-nucleoside phosphorylase family. Homodimer. K(+) is required as a cofactor.

It carries out the reaction uridine + phosphate = alpha-D-ribose 1-phosphate + uracil. The catalysed reaction is thymidine + phosphate = 2-deoxy-alpha-D-ribose 1-phosphate + thymine. It catalyses the reaction 2'-deoxyuridine + phosphate = 2-deoxy-alpha-D-ribose 1-phosphate + uracil. Its function is as follows. Catalyzes phosphorolysis of the pyrimidine nucleosides uridine, thymidine and 2'-deoxyuridine with the formation of the corresponding pyrimidine base and ribose-1-phosphate. This Geobacillus stearothermophilus (Bacillus stearothermophilus) protein is Pyrimidine-nucleoside phosphorylase (pdp).